A 202-amino-acid chain; its full sequence is dITP/XTP pyrophosphatase (202 aa).

7-12 (SRNEAK) is a substrate binding site. Asp-68 (proton acceptor) is an active-site residue. Asp-68 lines the Mg(2+) pocket. Residues Ser-69, 156–159 (FGYD), Lys-179, and 184–185 (HR) contribute to the substrate site.

It belongs to the HAM1 NTPase family. Homodimer. Requires Mg(2+) as cofactor.

It catalyses the reaction XTP + H2O = XMP + diphosphate + H(+). It carries out the reaction dITP + H2O = dIMP + diphosphate + H(+). The enzyme catalyses ITP + H2O = IMP + diphosphate + H(+). Pyrophosphatase that catalyzes the hydrolysis of nucleoside triphosphates to their monophosphate derivatives, with a high preference for the non-canonical purine nucleotides XTP (xanthosine triphosphate), dITP (deoxyinosine triphosphate) and ITP. Seems to function as a house-cleaning enzyme that removes non-canonical purine nucleotides from the nucleotide pool, thus preventing their incorporation into DNA/RNA and avoiding chromosomal lesions. In Frankia alni (strain DSM 45986 / CECT 9034 / ACN14a), this protein is dITP/XTP pyrophosphatase.